The chain runs to 637 residues: Chloride intracellular channel protein 6 (637 aa).

The disordered stretch occupies residues 1-400; sequence MAETAEPEGG…EASEEGDPGQ (400 aa). Positions 35 to 63 are enriched in low complexity; that stretch reads GPEASEGAAKAPSGEGAGAAAKAGATEEA. Ser-39 is modified (phosphoserine). Basic and acidic residues predominate over residues 126 to 137; sequence CELRGEAAREAE. Positions 138-152 are enriched in low complexity; it reads GQAAAPAAPGAQEEA. 15 repeat units span residues 155-160, 161-166, 167-172, 173-178, 179-184, 185-190, 191-196, 197-202, 203-208, 209-214, 215-220, 221-226, 227-232, 233-238, and 239-244. Residues 155 to 244 are 15 X 6 AA tandem repeat of [GEA]-[DGR]-[SN]-[VIM]-D-[AT]; the sequence is GDSVDAEGSI…SVDAGGSMDA (90 aa). The span at 247–256 shows a compositional bias: gly residues; that stretch reads PAGGAHGAGG. A compositionally biased stretch (acidic residues) spans 305-314; that stretch reads GSEDAAGEDG. A compositionally biased stretch (basic and acidic residues) spans 315-332; sequence DQGRPQEETEQQAERQEP. Ser-348 and Ser-393 each carry phosphoserine. The G-site motif lies at 420–423; sequence CPFS. Residues 422 to 442 form a helical membrane-spanning segment; the sequence is FSQRLFMILWLKGVIFNVTTV. A GST C-terminal domain is found at 466 to 637; it reads DGDVKTDVNK…AYSDVAKRMK (172 aa).

It belongs to the chloride channel CLIC family. As to quaternary structure, monomer (soluble state). Interacts with dopamine receptors DRD2, DRD3 and DRD4. Post-translationally, phosphorylated. In terms of tissue distribution, expressed in brain, chorioretinal, lacrimal glands, submandibular glands, airway epithelium, kidney and gastric mucosa, where it is preferentially expressed in cells that secrete or transport water. In brain, it is highly expressed in choroid plexus. Not detected in pancreas, adrenal glands, heart, skeletal muscle, ileal mucosa, liver and lung.

It localises to the cytoplasm. It is found in the cell membrane. It catalyses the reaction chloride(in) = chloride(out). With respect to regulation, channel activity is redox- and pH-regulated. Inhibited by IAA-94. Functionally, in the soluble state, catalyzes glutaredoxin-like thiol disulfide exchange reactions with reduced glutathione as electron donor. Can insert into membranes and form voltage-dependent chloride-selective channels. The channel opens upon membrane depolarization at positive voltages and closes at negative membrane voltages. May play a critical role in water-secreting cells, possibly through the regulation of chloride ion transport. The polypeptide is Chloride intracellular channel protein 6 (CLIC6) (Oryctolagus cuniculus (Rabbit)).